A 496-amino-acid polypeptide reads, in one-letter code: Squalene epoxidase ERG1 (496 aa).

The chain crosses the membrane as a helical span at residues Val4–Phe24. Residues Val15–Ile16, Glu35–Arg36, Arg43, Arg148, Val164, Asp332, and Met345 each bind FAD. The next 2 membrane-spanning stretches (helical) occupy residues Ile431 to Val451 and Leu466 to Phe486.

The protein belongs to the squalene monooxygenase family. It depends on FAD as a cofactor.

The protein localises to the microsome membrane. Its subcellular location is the endoplasmic reticulum membrane. It carries out the reaction squalene + reduced [NADPH--hemoprotein reductase] + O2 = (S)-2,3-epoxysqualene + oxidized [NADPH--hemoprotein reductase] + H2O + H(+). The protein operates within terpene metabolism; lanosterol biosynthesis; lanosterol from farnesyl diphosphate: step 2/3. With respect to regulation, activity is completely abolished by Triton X-100, deoxycholate or Cu(2+), and partially inhibited by thiol reagents, rotenone and antimycin A. The allylamine antimycotic agents naftifine and SF 86-327are potent inhibitors and show apparently non-competitive kinetics with respect to the substrate squalene. Its function is as follows. Squalene epoxidase; part of the third module of ergosterol biosynthesis pathway that includes the late steps of the pathway. Erg1 catalyzes the epoxidation of squalene into 2,3-epoxysqualene. The third module or late pathway involves the ergosterol synthesis itself through consecutive reactions that mainly occur in the endoplasmic reticulum (ER) membrane. Firstly, the squalene synthase ERG9 catalyzes the condensation of 2 farnesyl pyrophosphate moieties to form squalene, which is the precursor of all steroids. Squalene synthase is crucial for balancing the incorporation of farnesyl diphosphate (FPP) into sterol and nonsterol isoprene synthesis. Secondly, the squalene epoxidase ERG1 catalyzes the stereospecific oxidation of squalene to (S)-2,3-epoxysqualene, which is considered to be a rate-limiting enzyme in steroid biosynthesis. Then, the lanosterol synthase ERG7 catalyzes the cyclization of (S)-2,3 oxidosqualene to lanosterol, a reaction that forms the sterol core. In the next steps, lanosterol is transformed to zymosterol through a complex process involving various demethylation, reduction and desaturation reactions. The lanosterol 14-alpha-demethylase ERG11 (also known as CYP51) catalyzes C14-demethylation of lanosterol to produce 4,4'-dimethyl cholesta-8,14,24-triene-3-beta-ol, which is critical for ergosterol biosynthesis. The C-14 reductase ERG24 reduces the C14=C15 double bond of 4,4-dimethyl-cholesta-8,14,24-trienol to produce 4,4-dimethyl-cholesta-8,24-dienol. 4,4-dimethyl-cholesta-8,24-dienol is substrate of the C-4 demethylation complex ERG25-ERG26-ERG27 in which ERG25 catalyzes the three-step monooxygenation required for the demethylation of 4,4-dimethyl and 4alpha-methylsterols, ERG26 catalyzes the oxidative decarboxylation that results in a reduction of the 3-beta-hydroxy group at the C-3 carbon to an oxo group, and ERG27 is responsible for the reduction of the keto group on the C-3. ERG28 has a role as a scaffold to help anchor ERG25, ERG26 and ERG27 to the endoplasmic reticulum and ERG29 regulates the activity of the iron-containing C4-methylsterol oxidase ERG25. Then, the sterol 24-C-methyltransferase ERG6 catalyzes the methyl transfer from S-adenosyl-methionine to the C-24 of zymosterol to form fecosterol. The C-8 sterol isomerase ERG2 catalyzes the reaction which results in unsaturation at C-7 in the B ring of sterols and thus converts fecosterol to episterol. The sterol-C5-desaturase ERG3 then catalyzes the introduction of a C-5 double bond in the B ring to produce 5-dehydroepisterol. The C-22 sterol desaturase ERG5 further converts 5-dehydroepisterol into ergosta-5,7,22,24(28)-tetraen-3beta-ol by forming the C-22(23) double bond in the sterol side chain. Finally, ergosta-5,7,22,24(28)-tetraen-3beta-ol is substrate of the C-24(28) sterol reductase ERG4 to produce ergosterol. The protein is Squalene epoxidase ERG1 of Candida albicans (strain SC5314 / ATCC MYA-2876) (Yeast).